We begin with the raw amino-acid sequence, 211 residues long: MCPGNWLWASMTFMARFSRSSSRSPVRTRGTLEEMPTVQHPFLNVFELERLLYTGKTACNHADEVWPGLYLGDQDMANNRRELRRLGITHVLNASHSRWRGTPEAYEGLGIRYLGVEAHDSPAFDMSIHFQTAADFIHRALSQPGGKILVHCAVGVSRSATLVLAYLMLYHHLTLVEAIKKVKDHRGIIPNRGFLRQLLALDRRLRQGLEA.

In terms of domain architecture, Tyrosine-protein phosphatase spans 60 to 207 (NHADEVWPGL…LLALDRRLRQ (148 aa)). Cys-152 functions as the Phosphocysteine intermediate in the catalytic mechanism.

Belongs to the protein-tyrosine phosphatase family. Non-receptor class dual specificity subfamily. In terms of assembly, interacts with HSF4. Brain. In the brain it is expressed ubiquitously except in the hippocampus. Expressed in embryonal cancers (retinoblastoma, neuroepithilioma and neuroblastoma) and in anaplatic thyroid cancer.

It localises to the cytoplasm. The protein localises to the nucleus. Its subcellular location is the golgi apparatus. The enzyme catalyses O-phospho-L-tyrosyl-[protein] + H2O = L-tyrosyl-[protein] + phosphate. It carries out the reaction O-phospho-L-seryl-[protein] + H2O = L-seryl-[protein] + phosphate. The catalysed reaction is O-phospho-L-threonyl-[protein] + H2O = L-threonyl-[protein] + phosphate. In terms of biological role, inactivates MAPK1 and MAPK3 which leads to dephosphorylation of heat shock factor protein 4 and a reduction in its DNA-binding activity. Inhibits MAP kinase p38 by dephosphorylating it and inhibits p38-mediated apoptosis in anaplastic thyroid cancer cells. Can also induce activation of MAP kinase p38 and c-Jun N-terminal kinase (JNK). The chain is Dual specificity protein phosphatase 26 (DUSP26) from Homo sapiens (Human).